A 186-amino-acid polypeptide reads, in one-letter code: Large ribosomal subunit protein uL5c (186 aa).

The protein belongs to the universal ribosomal protein uL5 family. Part of the 50S ribosomal subunit; contacts the 5S rRNA.

Its subcellular location is the plastid. The protein localises to the chloroplast. Its function is as follows. Binds 5S rRNA, forms part of the central protuberance of the 50S subunit. In Chaetosphaeridium globosum (Charophycean green alga), this protein is Large ribosomal subunit protein uL5c (rpl5).